The primary structure comprises 186 residues: MILTKLKDFVGISEHDEYEEDYDEEMEFPQSVASQPPAEEVAPPPRISREPLSLNNETSIGTGVRNNVIGMPGINNSVAEVVVVEPHSFDEMPQVIQTLRERKSVVLNLNVMDPEEAQRAVDFVAGGTFAMDGHQERIGESIFLFTPNCVKVSSLAGRSQESNETSSSVSSDNFPTWGYETSRLAQ.

2 disordered regions span residues Glu-14 to Ser-59 and Gly-157 to Gln-186. Over residues Asp-16–Glu-27 the composition is skewed to acidic residues. Low complexity predominate over residues Ser-159–Ser-171.

Belongs to the SepF family. As to quaternary structure, homodimer. Interacts with FtsZ.

The protein resides in the cytoplasm. In terms of biological role, cell division protein that is part of the divisome complex and is recruited early to the Z-ring. Probably stimulates Z-ring formation, perhaps through the cross-linking of FtsZ protofilaments. Its function overlaps with FtsA. The chain is Cell division protein SepF from Synechocystis sp. (strain ATCC 27184 / PCC 6803 / Kazusa).